The chain runs to 842 residues: Xyloglucanase Xgh74A (842 aa).

The signal sequence occupies residues 1 to 32 (MVKKFTSKIKAAVFAAVVAATAIFGPAISSQA). D70 (nucleophile) is an active-site residue. BNR repeat units follow at residues 134-144 (RSTDRGETWEK), 185-196 (WRSTDYGVTWSK), 252-262 (YRSTDGGVTWK), and 358-368 (FRSTDGGATWK). The active-site Proton donor is D480. 5 BNR repeats span residues 533–541 (FSYDGGRNW), 577–586 (VTTDNGNSWK), 616–626 (YISTDGGLTFT), 660–671 (WRSTDGGYTFEK), and 708–718 (FRSDDAGKTWV). The region spanning 771–841 (DKGLVGDLNG…LLQAIPELPK (71 aa)) is the Dockerin domain.

This sequence belongs to the glycosyl hydrolase 74 family.

Functionally, hydrolyzes the glucosidic bonds of unbranched Glc residues in tamarind seed xyloglucan, producing XXXG, XLXG, XXLG and XLLG. Has low activity on carboxymethylcellulose, lichenan,hydroxyethylcellulose and glucuronoxylan, and no activity on xylan, polygalaturonic acid, wheat arabinoxylan, rhamnogalacturan, curdlan, laminarin, galactomannan, galactan, arabinan and pachyman or amorphous cellulose. In Acetivibrio thermocellus (Hungateiclostridium thermocellum), this protein is Xyloglucanase Xgh74A.